The chain runs to 839 residues: A disintegrin and metalloproteinase with thrombospondin motifs 4 (839 aa).

The first 51 residues, 1–51 (MSHMDSHPGRGLADGWLWGIQPRLLLPTVPVSGSRLVWLLLLASLLPSAWP), serve as a signal peptide directing secretion. The propeptide occupies 52–212 (ASPLPREEEI…PSPSPRRAKR (161 aa)). Asparagine 68 is a glycosylation site (N-linked (GlcNAc...) asparagine). The interval 166–209 (EGGAPNSAGGPGAHILRRKSPVSGQGPMCNVKAPPGKPSPSPRR) is disordered. Residues 192–199 (PMCNVKAP) carry the Cysteine switch motif. Residue cysteine 194 coordinates Zn(2+). Residues 218-428 (RFVETLVVAD…GFGHCLLDKP (211 aa)) form the Peptidase M12B domain. 11 disulfide bridges follow: cysteine 293-cysteine 345, cysteine 322-cysteine 327, cysteine 339-cysteine 423, cysteine 377-cysteine 407, cysteine 449-cysteine 472, cysteine 460-cysteine 482, cysteine 467-cysteine 501, cysteine 495-cysteine 506, cysteine 532-cysteine 569, cysteine 536-cysteine 574, and cysteine 547-cysteine 559. Histidine 361 is a Zn(2+) binding site. Glutamate 362 is a catalytic residue. Residues histidine 365 and histidine 371 each coordinate Zn(2+). Residues 437-519 (TFPGKDYDAD…DQLQAFNVPQ (83 aa)) form the Disintegrin domain. In terms of domain architecture, TSP type-1 spans 520–575 (AGGWGPWGSWGDCSRSCGGGVQFSSRDCTRPVPRNGGKYCEGRRTRFRSCNTQDCP). The tract at residues 686–839 (SKQSGSFKKF…LRRRSWAGRK (154 aa)) is spacer.

In terms of assembly, interacts with SRPX2. Requires Zn(2+) as cofactor. In terms of processing, the precursor is cleaved by a furin endopeptidase. Post-translationally, glycosylated. Can be O-fucosylated by POFUT2 on a serine or a threonine residue found within the consensus sequence C1-X(2)-(S/T)-C2-G of the TSP type-1 repeat domains where C1 and C2 are the first and second cysteine residue of the repeat, respectively. Fucosylated repeats can then be further glycosylated by the addition of a beta-1,3-glucose residue by the glucosyltransferase, B3GALTL. Fucosylation mediates the efficient secretion of ADAMTS family members. Can also be C-glycosylated with one or two mannose molecules on tryptophan residues within the consensus sequence W-X-X-W of the TPRs, and N-glycosylated. These other glycosylations can also facilitate secretion.

It is found in the secreted. It localises to the extracellular space. The protein resides in the extracellular matrix. It catalyses the reaction Glutamyl endopeptidase. Bonds cleaved include 370-Thr-Glu-Gly-Glu-|-Ala-Arg-Gly-Ser-377 in the interglobular domain of mammalian aggrecan.. Cleaves aggrecan, a cartilage proteoglycan, at the '392-Glu-|-Ala-393' site and may be involved in its turnover. Also cleaves COMP. May play an important role in the destruction of aggrecan in arthritic diseases. The chain is A disintegrin and metalloproteinase with thrombospondin motifs 4 (ADAMTS4) from Bos taurus (Bovine).